The following is a 209-amino-acid chain: MESIVFNVEPRDCDKNAAKKLRDQGKVPAVVYHKGEETIHICVDERSLKKLVHSSESHLIDLTFPDGKEKRSFLKEVQFDPVTDKIIHADFQFFSAGEVLEMDVPTTFIGEGEAPGVVAGGNVQVILHSLKVKAVPSNIPQHITIDVSGMELGQTMHIREIPVETYEGKFEIISDPDSSVVSIVAPKVEAEVIESEEEEETPAVASEEE.

It belongs to the bacterial ribosomal protein bL25 family. CTC subfamily. Part of the 50S ribosomal subunit; part of the 5S rRNA/L5/L18/L25 subcomplex. Contacts the 5S rRNA. Binds to the 5S rRNA independently of L5 and L18.

This is one of the proteins that binds to the 5S RNA in the ribosome where it forms part of the central protuberance. The sequence is that of Large ribosomal subunit protein bL25 from Chlorobium phaeobacteroides (strain BS1).